A 130-amino-acid chain; its full sequence is MKFRKGRPKIPRLISEEPQFKLFKPAGTPGIELESEVLTFEELESLRLVDYLNQPHEEAADAMGISRRVFWNILKSARKKVADALINGKMIDIGGGYYKIRECNYEDECQRGRNCRYGVSNCLTLKKDSE.

It belongs to the UPF0251 family.

This Methanococcus maripaludis (strain C6 / ATCC BAA-1332) protein is UPF0251 protein MmarC6_0272.